The following is a 92-amino-acid chain: Envelope glycoprotein J (92 aa).

Residues 1–22 (MDRYAVRTWGIVGILGCAAVGA) form the signal peptide. Over 23-49 (APTGPASDTTNATARLPTHPPLIRSGG) the chain is Extracellular. The N-linked (GlcNAc...) asparagine; by host glycan is linked to asparagine 33. Residues 50–70 (FAVPLIVGGLCLMILGMACLL) traverse the membrane as a helical segment. The Cytoplasmic segment spans residues 71 to 92 (EVLRRLGRELARCCPHAGQFAP).

This sequence belongs to the alphaherpesvirinae glycoprotein J family.

The protein resides in the host Golgi apparatus membrane. It is found in the host endoplasmic reticulum membrane. Its subcellular location is the host endosome membrane. Functions as an activator of viral protein expression and virus production. In turn, promotes cell-to-cell spread as well as syncytia formation. In Homo sapiens (Human), this protein is Envelope glycoprotein J (gJ).